A 310-amino-acid polypeptide reads, in one-letter code: Glutaminase (310 aa).

Positions 67, 118, 161, 168, 192, 244, and 262 each coordinate substrate.

This sequence belongs to the glutaminase family. Homotetramer.

It catalyses the reaction L-glutamine + H2O = L-glutamate + NH4(+). The sequence is that of Glutaminase from Legionella pneumophila subsp. pneumophila (strain Philadelphia 1 / ATCC 33152 / DSM 7513).